Reading from the N-terminus, the 442-residue chain is Exodeoxyribonuclease 7 large subunit (442 aa).

Belongs to the XseA family. Heterooligomer composed of large and small subunits.

The protein resides in the cytoplasm. The catalysed reaction is Exonucleolytic cleavage in either 5'- to 3'- or 3'- to 5'-direction to yield nucleoside 5'-phosphates.. Bidirectionally degrades single-stranded DNA into large acid-insoluble oligonucleotides, which are then degraded further into small acid-soluble oligonucleotides. This Rickettsia bellii (strain OSU 85-389) protein is Exodeoxyribonuclease 7 large subunit.